We begin with the raw amino-acid sequence, 635 residues long: Glutamyl-tRNA(Gln) amidotransferase subunit E (635 aa).

Positions 415-437 are disordered; sequence LPDGNTEYMRPLPGKARMYPETD.

It belongs to the GatB/GatE family. GatE subfamily. Heterodimer of GatD and GatE.

It carries out the reaction L-glutamyl-tRNA(Gln) + L-glutamine + ATP + H2O = L-glutaminyl-tRNA(Gln) + L-glutamate + ADP + phosphate + H(+). Its function is as follows. Allows the formation of correctly charged Gln-tRNA(Gln) through the transamidation of misacylated Glu-tRNA(Gln) in organisms which lack glutaminyl-tRNA synthetase. The reaction takes place in the presence of glutamine and ATP through an activated gamma-phospho-Glu-tRNA(Gln). The GatDE system is specific for glutamate and does not act on aspartate. This is Glutamyl-tRNA(Gln) amidotransferase subunit E from Pyrococcus horikoshii (strain ATCC 700860 / DSM 12428 / JCM 9974 / NBRC 100139 / OT-3).